The sequence spans 86 residues: Small ribosomal subunit protein uS17 (86 aa).

It belongs to the universal ribosomal protein uS17 family. In terms of assembly, part of the 30S ribosomal subunit.

In terms of biological role, one of the primary rRNA binding proteins, it binds specifically to the 5'-end of 16S ribosomal RNA. The sequence is that of Small ribosomal subunit protein uS17 from Streptococcus gordonii (strain Challis / ATCC 35105 / BCRC 15272 / CH1 / DL1 / V288).